The primary structure comprises 727 residues: Polyribonucleotide nucleotidyltransferase (727 aa).

Asp-488 and Asp-494 together coordinate Mg(2+). A KH domain is found at 555–614; the sequence is PKLYTMKINPEKIRDVIGKGGATIRALTDETGCQINIEEDGTITIAATEAAKADEAKRRI. In terms of domain architecture, S1 motif spans 624–692; it reads GKIYEGPVTK…DKGRVKLSMK (69 aa). The disordered stretch occupies residues 691-727; that stretch reads MKALADRPAGDSGRPAPAERGERRERRDGGASEQQQQ. Positions 707–720 are enriched in basic and acidic residues; that stretch reads PAERGERRERRDGG.

Belongs to the polyribonucleotide nucleotidyltransferase family. Mg(2+) serves as cofactor.

It localises to the cytoplasm. The catalysed reaction is RNA(n+1) + phosphate = RNA(n) + a ribonucleoside 5'-diphosphate. Involved in mRNA degradation. Catalyzes the phosphorolysis of single-stranded polyribonucleotides processively in the 3'- to 5'-direction. This Acidovorax sp. (strain JS42) protein is Polyribonucleotide nucleotidyltransferase.